We begin with the raw amino-acid sequence, 299 residues long: 4-diphosphocytidyl-2-C-methyl-D-erythritol kinase (299 aa).

K17 is an active-site residue. 99–109 provides a ligand contact to ATP; sequence PLASGLGGGSS. D142 is an active-site residue.

This sequence belongs to the GHMP kinase family. IspE subfamily.

It catalyses the reaction 4-CDP-2-C-methyl-D-erythritol + ATP = 4-CDP-2-C-methyl-D-erythritol 2-phosphate + ADP + H(+). It functions in the pathway isoprenoid biosynthesis; isopentenyl diphosphate biosynthesis via DXP pathway; isopentenyl diphosphate from 1-deoxy-D-xylulose 5-phosphate: step 3/6. Catalyzes the phosphorylation of the position 2 hydroxy group of 4-diphosphocytidyl-2C-methyl-D-erythritol. The polypeptide is 4-diphosphocytidyl-2-C-methyl-D-erythritol kinase (Deinococcus radiodurans (strain ATCC 13939 / DSM 20539 / JCM 16871 / CCUG 27074 / LMG 4051 / NBRC 15346 / NCIMB 9279 / VKM B-1422 / R1)).